A 142-amino-acid chain; its full sequence is Sorting nexin-3 (142 aa).

One can recognise a PX domain in the interval 21–138; that stretch reads NFLEIEVRNP…AAFVQDPNWD (118 aa). A 1,2-diacyl-sn-glycero-3-phospho-(1D-myo-inositol-3-phosphate)-binding residues include Arg64, Ser66, Lys90, Arg95, and Arg104.

This sequence belongs to the sorting nexin family.

It is found in the cytoplasm. It localises to the golgi apparatus membrane. The protein localises to the prevacuolar compartment membrane. Functionally, required for retention of late Golgi membrane proteins. Component of the retrieval machinery that functions by direct interaction with the cytosolic tails of certain TGN membrane proteins during the sorting/budding process at the prevacuolar compartment. Binds phosphatidylinositol 3-phosphate (PtdIns(P3)). The chain is Sorting nexin-3 (snx-3) from Neurospora crassa (strain ATCC 24698 / 74-OR23-1A / CBS 708.71 / DSM 1257 / FGSC 987).